A 173-amino-acid polypeptide reads, in one-letter code: RNA pyrophosphohydrolase (173 aa).

Residues glycine 6–arginine 149 form the Nudix hydrolase domain. The Nudix box signature appears at glycine 38–glycine 59.

This sequence belongs to the Nudix hydrolase family. RppH subfamily. A divalent metal cation serves as cofactor.

Accelerates the degradation of transcripts by removing pyrophosphate from the 5'-end of triphosphorylated RNA, leading to a more labile monophosphorylated state that can stimulate subsequent ribonuclease cleavage. This chain is RNA pyrophosphohydrolase, found in Psychrobacter sp. (strain PRwf-1).